Here is a 1227-residue protein sequence, read N- to C-terminus: DNA-directed RNA polymerase subunit beta' (1227 aa).

Zn(2+) is bound by residues Cys60, Cys62, Cys75, and Cys78. Mg(2+) is bound by residues Asp449, Asp451, and Asp453. Zn(2+) is bound by residues Cys847, Cys921, Cys928, and Cys931.

This sequence belongs to the RNA polymerase beta' chain family. As to quaternary structure, the RNAP catalytic core consists of 2 alpha, 1 beta, 1 beta' and 1 omega subunit. When a sigma factor is associated with the core the holoenzyme is formed, which can initiate transcription. Mg(2+) is required as a cofactor. It depends on Zn(2+) as a cofactor.

The catalysed reaction is RNA(n) + a ribonucleoside 5'-triphosphate = RNA(n+1) + diphosphate. Its function is as follows. DNA-dependent RNA polymerase catalyzes the transcription of DNA into RNA using the four ribonucleoside triphosphates as substrates. This Lysinibacillus sphaericus (strain C3-41) protein is DNA-directed RNA polymerase subunit beta'.